The following is a 444-amino-acid chain: Methylenetetrahydrofolate--tRNA-(uracil-5-)-methyltransferase TrmFO (444 aa).

FAD is bound at residue 10-15; that stretch reads GAGLAG.

This sequence belongs to the MnmG family. TrmFO subfamily. FAD serves as cofactor.

It localises to the cytoplasm. The catalysed reaction is uridine(54) in tRNA + (6R)-5,10-methylene-5,6,7,8-tetrahydrofolate + NADH + H(+) = 5-methyluridine(54) in tRNA + (6S)-5,6,7,8-tetrahydrofolate + NAD(+). It carries out the reaction uridine(54) in tRNA + (6R)-5,10-methylene-5,6,7,8-tetrahydrofolate + NADPH + H(+) = 5-methyluridine(54) in tRNA + (6S)-5,6,7,8-tetrahydrofolate + NADP(+). Catalyzes the folate-dependent formation of 5-methyl-uridine at position 54 (M-5-U54) in all tRNAs. The protein is Methylenetetrahydrofolate--tRNA-(uracil-5-)-methyltransferase TrmFO of Streptococcus pneumoniae serotype 2 (strain D39 / NCTC 7466).